The chain runs to 493 residues: Ribosomal protein uS12 methylthiotransferase RimO (493 aa).

Positions 5 to 121 (RTVALVTLGC…ISDRLQTILN (117 aa)) constitute an MTTase N-terminal domain. 3 residues coordinate [4Fe-4S] cluster: C14, C50, and C84. The tract at residues 153 to 177 (LPGHGPTDLPEGVAPASGPRAPLRR) is disordered. The Radical SAM core domain occupies 179–410 (LDGSPVASVK…RLAEELVSQR (232 aa)). C193, C197, and C200 together coordinate [4Fe-4S] cluster. Positions 412–482 (DERVGATVRV…GVDLVAEPLL (71 aa)) constitute a TRAM domain.

Belongs to the methylthiotransferase family. RimO subfamily. It depends on [4Fe-4S] cluster as a cofactor.

It is found in the cytoplasm. The enzyme catalyses L-aspartate(89)-[ribosomal protein uS12]-hydrogen + (sulfur carrier)-SH + AH2 + 2 S-adenosyl-L-methionine = 3-methylsulfanyl-L-aspartate(89)-[ribosomal protein uS12]-hydrogen + (sulfur carrier)-H + 5'-deoxyadenosine + L-methionine + A + S-adenosyl-L-homocysteine + 2 H(+). In terms of biological role, catalyzes the methylthiolation of an aspartic acid residue of ribosomal protein uS12. In Streptomyces coelicolor (strain ATCC BAA-471 / A3(2) / M145), this protein is Ribosomal protein uS12 methylthiotransferase RimO.